A 431-amino-acid chain; its full sequence is Tryptophan--tRNA ligase (431 aa).

Residues 12–14 and 20–21 contribute to the ATP site; these read TPS and GN. The 'HIGH' region signature appears at 13–21; that stretch reads PSGTPHLGN. Asp-145 provides a ligand contact to L-tryptophan. ATP is bound by residues 157–159, Leu-197, and 204–208; these read GRD and KMSKS. Residues 204-208 carry the 'KMSKS' region motif; sequence KMSKS.

It belongs to the class-I aminoacyl-tRNA synthetase family. As to quaternary structure, homodimer.

The protein resides in the cytoplasm. The catalysed reaction is tRNA(Trp) + L-tryptophan + ATP = L-tryptophyl-tRNA(Trp) + AMP + diphosphate + H(+). Catalyzes the attachment of tryptophan to tRNA(Trp). This chain is Tryptophan--tRNA ligase, found in Xanthomonas campestris pv. campestris (strain ATCC 33913 / DSM 3586 / NCPPB 528 / LMG 568 / P 25).